The following is a 253-amino-acid chain: Probable transcriptional regulatory protein Tpet_0454 (253 aa).

This sequence belongs to the TACO1 family.

It is found in the cytoplasm. This is Probable transcriptional regulatory protein Tpet_0454 from Thermotoga petrophila (strain ATCC BAA-488 / DSM 13995 / JCM 10881 / RKU-1).